A 133-amino-acid chain; its full sequence is Small ribosomal subunit protein uS8 (133 aa).

It belongs to the universal ribosomal protein uS8 family. Part of the 30S ribosomal subunit. Contacts proteins S5 and S12.

Its function is as follows. One of the primary rRNA binding proteins, it binds directly to 16S rRNA central domain where it helps coordinate assembly of the platform of the 30S subunit. The sequence is that of Small ribosomal subunit protein uS8 from Nostoc punctiforme (strain ATCC 29133 / PCC 73102).